Reading from the N-terminus, the 167-residue chain is NAD(P)H-quinone oxidoreductase subunit I, chloroplastic (167 aa).

4Fe-4S ferredoxin-type domains lie at 55-84 and 95-124; these read GRIH…VDWK and LNYS…MTEE. Positions 64, 67, 70, 74, 104, 107, 110, and 114 each coordinate [4Fe-4S] cluster.

This sequence belongs to the complex I 23 kDa subunit family. As to quaternary structure, NDH is composed of at least 16 different subunits, 5 of which are encoded in the nucleus. The cofactor is [4Fe-4S] cluster.

The protein resides in the plastid. The protein localises to the chloroplast thylakoid membrane. It catalyses the reaction a plastoquinone + NADH + (n+1) H(+)(in) = a plastoquinol + NAD(+) + n H(+)(out). The catalysed reaction is a plastoquinone + NADPH + (n+1) H(+)(in) = a plastoquinol + NADP(+) + n H(+)(out). In terms of biological role, NDH shuttles electrons from NAD(P)H:plastoquinone, via FMN and iron-sulfur (Fe-S) centers, to quinones in the photosynthetic chain and possibly in a chloroplast respiratory chain. The immediate electron acceptor for the enzyme in this species is believed to be plastoquinone. Couples the redox reaction to proton translocation, and thus conserves the redox energy in a proton gradient. This is NAD(P)H-quinone oxidoreductase subunit I, chloroplastic from Pelargonium hortorum (Common geranium).